The primary structure comprises 255 residues: Trypsin alpha-4 (255 aa).

The N-terminal stretch at 1–16 (MLKFVVLLCAISCALG) is a signal peptide. Residues 17 to 30 (AAVPEGMVPQLDGR) constitute a propeptide, activation peptide. In terms of domain architecture, Peptidase S1 spans 31–253 (IVGGVATTIS…LRTWVVSAAS (223 aa)). Cys-56 and Cys-72 are joined by a disulfide. Active-site charge relay system residues include His-71 and Asp-116. Cystine bridges form between Cys-179–Cys-196 and Cys-205–Cys-229. Ser-209 (charge relay system) is an active-site residue.

Belongs to the peptidase S1 family.

It localises to the secreted. It is found in the extracellular space. It carries out the reaction Preferential cleavage: Arg-|-Xaa, Lys-|-Xaa.. In Lucilia cuprina (Green bottle fly), this protein is Trypsin alpha-4.